Reading from the N-terminus, the 384-residue chain is MSEQLVTPENVTTKDGKINLLDLNRQQMREFFKDLGEKPFRADQVMKWMYHYCCDNFDEMTDINKVLRGKLKEVAEIRAPEVVEEQRSSDGTIKWAIAVGDQRVETVYIPEVDRATLCVSSQVGCALECKFCSTAQQGFNRNLRVSEIIGQVWRAAKIVGAAKVTGQRPITNVVMMGMGEPLLNLNNVVPAMEIMLDDFGFGLSKRRVTLSTSGVVPALDKLGDMIDVALAISLHAPNDEIRDEIVPINKKYNIETFLAAVRRYLEKSNANQGRVTIEYVMLDHVNDGTEHAHQLAELLKDTPCKINLIPWNPFPGAPYGRSSNSRIDRFSKVLMSYGFTTIVRKTRGDDIDAACGQLAGDVIDRTKRTLRKRMQGEAIDIKAV.

Glu105 serves as the catalytic Proton acceptor. The 240-residue stretch at 111–350 (EVDRATLCVS…TIVRKTRGDD (240 aa)) folds into the Radical SAM core domain. A disulfide bridge links Cys118 with Cys355. 3 residues coordinate [4Fe-4S] cluster: Cys125, Cys129, and Cys132. Residues 179-180 (GE), Ser211, 233-235 (SLH), and Asn312 contribute to the S-adenosyl-L-methionine site. Cys355 serves as the catalytic S-methylcysteine intermediate.

This sequence belongs to the radical SAM superfamily. RlmN family. Requires [4Fe-4S] cluster as cofactor.

It is found in the cytoplasm. The catalysed reaction is adenosine(2503) in 23S rRNA + 2 reduced [2Fe-2S]-[ferredoxin] + 2 S-adenosyl-L-methionine = 2-methyladenosine(2503) in 23S rRNA + 5'-deoxyadenosine + L-methionine + 2 oxidized [2Fe-2S]-[ferredoxin] + S-adenosyl-L-homocysteine. It catalyses the reaction adenosine(37) in tRNA + 2 reduced [2Fe-2S]-[ferredoxin] + 2 S-adenosyl-L-methionine = 2-methyladenosine(37) in tRNA + 5'-deoxyadenosine + L-methionine + 2 oxidized [2Fe-2S]-[ferredoxin] + S-adenosyl-L-homocysteine. Its function is as follows. Specifically methylates position 2 of adenine 2503 in 23S rRNA and position 2 of adenine 37 in tRNAs. m2A2503 modification seems to play a crucial role in the proofreading step occurring at the peptidyl transferase center and thus would serve to optimize ribosomal fidelity. The chain is Dual-specificity RNA methyltransferase RlmN from Escherichia coli O9:H4 (strain HS).